We begin with the raw amino-acid sequence, 208 residues long: Myosin light chain 6B (208 aa).

The segment at 1 to 51 (MPPKKDVPVKKPAGPSISKPAAKPAAAGAPPAKTKAEPAVPQAPQKTQEPP) is disordered. Positions 10–40 (KKPAGPSISKPAAKPAAAGAPPAKTKAEPAV) are enriched in low complexity. 3 consecutive EF-hand domains span residues 64–99 (DQLE…LGQN), 141–176 (GTYE…LGEK), and 176–208 (KMTE…ILSV).

Myosin is a hexamer of 2 heavy chains and 4 light chains.

Regulatory light chain of myosin. Does not bind calcium. This is Myosin light chain 6B (MYL6B) from Homo sapiens (Human).